Here is a 772-residue protein sequence, read N- to C-terminus: Metabotropic glutamate receptor-like protein G (772 aa).

Positions 1–23 are cleaved as a signal peptide; the sequence is MKKIIFLVLFLIFIFKDIKSSYG. Topologically, residues 24-391 are extracellular; sequence VDLVNFKMIT…TQVKFSPSIQ (368 aa). N-linked (GlcNAc...) asparagine glycans are attached at residues asparagine 73, asparagine 126, asparagine 262, asparagine 313, asparagine 343, and asparagine 378. The chain crosses the membrane as a helical span at residues 392–412; that stretch reads IGVSIVSGVLIAIVLLSMVGV. Topologically, residues 413 to 426 are cytoplasmic; sequence YKYRASSSIRSASP. The helical transmembrane segment at 427–447 threads the bilayer; that stretch reads IFLIFILFGALIVFGGIILWV. At 448–463 the chain is on the extracellular side; it reads SELNDHVCNGRLWMVT. Residues 464–484 traverse the membrane as a helical segment; sequence LGFSTLIGSLVVKNFRIWLIF. The Cytoplasmic segment spans residues 485-500; that stretch reads DNPELKTVKITNYQLY. A helical membrane pass occupies residues 501 to 521; sequence PWVACCLVINIILMSILTSLG. The Extracellular portion of the chain corresponds to 522–551; sequence DLREVDATGIDSLGKYEFLKICKMNNSGAS. Asparagine 546 carries N-linked (GlcNAc...) asparagine glycosylation. Residues 552-572 form a helical membrane-spanning segment; sequence VLYTILAYFGALLLTGVFVSW. The Cytoplasmic portion of the chain corresponds to 573–586; it reads KIRIVDIEEFNESR. The chain crosses the membrane as a helical span at residues 587 to 607; sequence AIAHTLYAISFCLFVIVPLMI. The Extracellular portion of the chain corresponds to 608–616; the sequence is SPLEKQSET. The helical transmembrane segment at 617–637 threads the bilayer; the sequence is IILSVAGLFITTAAVLIIFLP. The Cytoplasmic portion of the chain corresponds to 638-772; it reads KFYRVYEYGE…QIEPDEKNQD (135 aa). The segment at 664–772 is disordered; sequence TARAESHKSS…QIEPDEKNQD (109 aa). Acidic residues predominate over residues 718 to 728; sequence FTEESVSEIDE. The segment covering 740–753 has biased composition (low complexity); the sequence is PEINQSEQQNSEIE. Pro residues predominate over residues 754–763; that stretch reads QPPPPPPPQQ.

It in the N-terminal section; belongs to the BMP lipoprotein family. The protein in the C-terminal section; belongs to the G-protein coupled receptor 3 family. GABA-B receptor subfamily.

Its subcellular location is the membrane. This Dictyostelium discoideum (Social amoeba) protein is Metabotropic glutamate receptor-like protein G (grlG).